Reading from the N-terminus, the 614-residue chain is V-type proton ATPase catalytic subunit A isoform 1 (614 aa).

247 to 254 serves as a coordination point for ATP; the sequence is GAFGCGKT.

The protein belongs to the ATPase alpha/beta chains family. As to quaternary structure, V-ATPase is a heteromultimeric enzyme made up of two complexes: the ATP-hydrolytic V1 complex and the proton translocation V0 complex. The V1 complex consists of three catalytic AB heterodimers that form a heterohexamer, three peripheral stalks each consisting of EG heterodimers, one central rotor including subunits D and F, and the regulatory subunits C and H. The proton translocation complex V0 consists of the proton transport subunit a, a ring of proteolipid subunits c9c'', rotary subunit d, subunits e and f, and the accessory subunits VhaAC45 and ATP6AP2.

It catalyses the reaction ATP + H2O + 4 H(+)(in) = ADP + phosphate + 5 H(+)(out). Its activity is regulated as follows. ATP hydrolysis occurs at the interface between the nucleotide-binding domains of subunits A and B. ATP hydrolysis triggers a conformational change in the subunits D and F, which induces a shift of subunit d. The c-ring is subsequently rotated and results in a continuous proton translocation across the membrane. Functionally, catalytic subunit of the V1 complex of vacuolar(H+)-ATPase (V-ATPase), a multisubunit enzyme composed of a peripheral complex (V1) that hydrolyzes ATP and a membrane integral complex (V0) that translocates protons. V-ATPase is responsible for acidifying and maintaining the pH of intracellular compartments and in some cell types, is targeted to the plasma membrane, where it is responsible for acidifying the extracellular environment. This Drosophila melanogaster (Fruit fly) protein is V-type proton ATPase catalytic subunit A isoform 1 (Vha68-1).